Here is a 691-residue protein sequence, read N- to C-terminus: DNA ligase (691 aa).

Residues 41-45, 91-92, and Glu-121 each bind NAD(+); these read DAEFD and SL. Catalysis depends on Lys-123, which acts as the N6-AMP-lysine intermediate. Residues Arg-144, Glu-184, Lys-300, and Lys-324 each contribute to the NAD(+) site. Zn(2+) contacts are provided by Cys-418, Cys-421, Cys-437, and Cys-443. In terms of domain architecture, BRCT spans 607–691; that stretch reads SVPRTLAGLT…LLADGPASRT (85 aa).

Belongs to the NAD-dependent DNA ligase family. LigA subfamily. The cofactor is Mg(2+). Mn(2+) is required as a cofactor.

The enzyme catalyses NAD(+) + (deoxyribonucleotide)n-3'-hydroxyl + 5'-phospho-(deoxyribonucleotide)m = (deoxyribonucleotide)n+m + AMP + beta-nicotinamide D-nucleotide.. Its function is as follows. DNA ligase that catalyzes the formation of phosphodiester linkages between 5'-phosphoryl and 3'-hydroxyl groups in double-stranded DNA using NAD as a coenzyme and as the energy source for the reaction. It is essential for DNA replication and repair of damaged DNA. In Mycobacterium tuberculosis (strain ATCC 25177 / H37Ra), this protein is DNA ligase.